We begin with the raw amino-acid sequence, 440 residues long: Cysteine proteinase (440 aa).

The N-terminal stretch at 1–60 is a signal peptide; the sequence is MYSSSVVSNPNERLVNNRVENDLESSDDTLSTQAKPVSRLLTRKLLLGVVVLFFLAGVSV. Residues 61 to 229 constitute a propeptide, activation peptide; it reads VSYFLFSKYK…DEDVDLAKLT (169 aa). Residues 166 to 182 form an involved in processing to yield active enzymes region; the sequence is VKGINRFSDLTEREFYK. N206 carries N-linked (GlcNAc...) asparagine glycosylation. C250 and C291 form a disulfide bridge. Residues C253, H382, and N404 contribute to the active site.

It belongs to the peptidase C1 family.

The polypeptide is Cysteine proteinase (Theileria parva (East coast fever infection agent)).